The primary structure comprises 49 residues: Light-harvesting protein B-875 beta chain (49 aa).

Over Ala-2–Gly-27 the chain is Cytoplasmic. The a bacteriochlorophyll site is built by His-21 and His-39. The helical; Signal-anchor for type II membrane protein transmembrane segment at Leu-28–Trp-45 threads the bilayer. At Arg-46 to Phe-49 the chain is on the periplasmic side.

This sequence belongs to the antenna complex beta subunit family. The core complex is formed by different alpha and beta chains, binding bacteriochlorophyll molecules, and arranged most probably in tetrameric structures disposed around the reaction center. The non-pigmented gamma chains may constitute additional components.

It localises to the cell inner membrane. Its function is as follows. Antenna complexes are light-harvesting systems, which transfer the excitation energy to the reaction centers. The sequence is that of Light-harvesting protein B-875 beta chain (pufB) from Cereibacter sphaeroides (strain ATCC 17023 / DSM 158 / JCM 6121 / CCUG 31486 / LMG 2827 / NBRC 12203 / NCIMB 8253 / ATH 2.4.1.) (Rhodobacter sphaeroides).